We begin with the raw amino-acid sequence, 91 residues long: Probable Fe(2+)-trafficking protein (91 aa).

The protein belongs to the Fe(2+)-trafficking protein family.

In terms of biological role, could be a mediator in iron transactions between iron acquisition and iron-requiring processes, such as synthesis and/or repair of Fe-S clusters in biosynthetic enzymes. The polypeptide is Probable Fe(2+)-trafficking protein (Mannheimia succiniciproducens (strain KCTC 0769BP / MBEL55E)).